A 49-amino-acid chain; its full sequence is DNA-directed RNA polymerase subunit Rpo12 (49 aa).

Positions 11, 27, and 30 each coordinate Zn(2+).

The protein belongs to the archaeal Rpo12/eukaryotic RPC10 RNA polymerase subunit family. In terms of assembly, part of the RNA polymerase complex. Zn(2+) is required as a cofactor.

It localises to the cytoplasm. The catalysed reaction is RNA(n) + a ribonucleoside 5'-triphosphate = RNA(n+1) + diphosphate. Its function is as follows. DNA-dependent RNA polymerase (RNAP) catalyzes the transcription of DNA into RNA using the four ribonucleoside triphosphates as substrates. The chain is DNA-directed RNA polymerase subunit Rpo12 from Pyrococcus horikoshii (strain ATCC 700860 / DSM 12428 / JCM 9974 / NBRC 100139 / OT-3).